A 418-amino-acid chain; its full sequence is MADGYENHAPENLQGKYQAMVVCCILGIGSLFSWNSMLTIADYYYQVFPDYHPSRVFTLIYQPIALGTIMILAYRESKISTRKRILTGYILFTISTFLLIVLDLTTKGHGGIGHYIVLCTIVASFGLADATVKGGLVGDLSLMCPELIQSYMAGSGMAGALTSVLRLITKAAFEKSNNSLRKGAMIFLAISTFIELLCVILYAYVFPKLPIVKYYRRKAASEGSKTVVADLAAAGIQNLSDLSDDDSKNQMLRKKELLLQNIDHAVNLFLIYVLTLSIFPGFLYENTGQHGLGDWYALILVATYNFWDLFGRYAPLVKWLKLENRKALTIAVLTRYFLVPAFYFTAKYGDKGWMIMLVSILGLTTGHLTVCIMTIAPNGYKGPEKNALGNLLVVFILGGAVVGISLGWLWLIGKKYAF.

A run of 11 helical transmembrane segments spans residues 20-40 (MVVCCILGIGSLFSWNSMLTI), 54-74 (SRVFTLIYQPIALGTIMILAY), 85-105 (ILTGYILFTISTFLLIVLDLT), 108-128 (GHGGIGHYIVLCTIVASFGLA), 147-169 (LIQSYMAGSGMAGALTSVLRLIT), 186-206 (IFLAISTFIELLCVILYAYVF), 264-284 (HAVNLFLIYVLTLSIFPGFLY), 291-311 (GLGDWYALILVATYNFWDLFG), 326-346 (KALTIAVLTRYFLVPAFYFTA), 353-373 (WMIMLVSILGLTTGHLTVCIM), and 392-412 (LVVFILGGAVVGISLGWLWLI).

It belongs to the SLC29A/ENT transporter (TC 2.A.57) family. Expressed in leaves and at lowe levels in stems and flowers.

Its subcellular location is the cell membrane. Nucleoside transporter that can mediate uptake of adenosine, uridine, guanosine or cytidine when expressed in a heterologous system (yeast). The protein is Equilibrative nucleotide transporter 4 (ENT4) of Arabidopsis thaliana (Mouse-ear cress).